Here is a 538-residue protein sequence, read N- to C-terminus: Tryptophan 7-halogenase PrnA (538 aa).

Positions 13, 15, 16, 39, 42, 45, 49, and 50 each coordinate FAD. The active site involves lysine 79. Lysine 79 is a binding site for 7-chloro-L-tryptophan. 2 residues coordinate FAD: valine 187 and leucine 337. Residue glutamate 346 coordinates 7-chloro-L-tryptophan. Glutamate 346 contacts L-tryptophan. 2 residues coordinate chloride: threonine 348 and glycine 349. Isoleucine 350 is an FAD binding site. 7-chloro-L-tryptophan contacts are provided by tyrosine 443, tyrosine 444, glutamate 450, and phenylalanine 454. L-tryptophan is bound by residues tyrosine 443, tyrosine 444, glutamate 450, and phenylalanine 454.

The protein belongs to the flavin-dependent halogenase family. Bacterial tryptophan halogenase subfamily. Homodimer.

It catalyses the reaction L-tryptophan + FADH2 + chloride + O2 = 7-chloro-L-tryptophan + FAD + 2 H2O. The protein operates within antibiotic biosynthesis. Involved in the biosynthesis of the antifungal antibiotic pyrrolnitrin. Catalyzes the chlorination of tryptophan (Trp) at C7 position to yield 7-chloro-L-tryptophan (7-CLT). This is Tryptophan 7-halogenase PrnA from Pseudomonas fluorescens.